We begin with the raw amino-acid sequence, 251 residues long: Transcriptional regulator CBF1 (251 aa).

Positions 1–169 (MVKSHKRTLE…VERKRRESIN (169 aa)) are disordered. Positions 7–28 (RTLEKDEEHQEKKKANKISKDD) are enriched in basic and acidic residues. Over residues 40-56 (ASDSAHTDTATAAVAAV) the composition is skewed to low complexity. A compositionally biased stretch (polar residues) spans 67-76 (TESSTNQTSA). The span at 77–105 (LDKDDKETKDNLNPREETQSSHQEIDIPK) shows a compositional bias: basic and acidic residues. The span at 107–116 (QLTNQQNLAD) shows a compositional bias: polar residues. Residues 117 to 126 (QHQQYQYHQQ) show a composition bias toward low complexity. A compositionally biased stretch (polar residues) spans 127 to 140 (LAQTNFKTEPTNSA). Basic and acidic residues predominate over residues 144–167 (HGSEEWHRQRRENHKEVERKRRES). The 49-residue stretch at 152–200 (QRRENHKEVERKRRESINTGIRELARLIPTTDTNKAQILQRAVEYIKRL) folds into the bHLH domain. Residues 190–223 (LQRAVEYIKRLKENENNNIEKWTLEKLLTEQAVS) adopt a coiled-coil conformation.

It localises to the nucleus. In terms of biological role, transcription factor that binds ribosomal protein gene promoters and rDNA locus with TBF1. Necessary for the expression of genes involved in assimilation of inorganic sulfate. Also required for the expression of respiratory genes and glycolytic genes. Does not bind to centromeres and is not necessary for efficient chromosome segregationas as does S.cerevisiae CBF1. In Candida albicans (strain SC5314 / ATCC MYA-2876) (Yeast), this protein is Transcriptional regulator CBF1 (CBF1).